The sequence spans 306 residues: Ribonuclease H2 subunit B (306 aa).

The interval 232-285 (LPDLSSPTPEPPVKKRKVSEAPVEAEEDYTKFNSDSKNKKSNSKMTAAQKSLAK) is disordered. Residues 259 to 269 (DYTKFNSDSKN) are compositionally biased toward basic and acidic residues.

The protein belongs to the RNase H2 subunit B family. The RNase H2 complex is a heterotrimer composed of the catalytic subunit rnaseh2a and the non-catalytic subunits rnaseh2b and rnaseh2c.

The protein resides in the nucleus. In terms of biological role, non catalytic subunit of RNase H2, an endonuclease that specifically degrades the RNA of RNA:DNA hybrids. Participates in DNA replication, possibly by mediating the removal of lagging-strand Okazaki fragment RNA primers during DNA replication. Mediates the excision of single ribonucleotides from DNA:RNA duplexes. The sequence is that of Ribonuclease H2 subunit B (rnaseh2b) from Xenopus tropicalis (Western clawed frog).